A 376-amino-acid polypeptide reads, in one-letter code: Homocitrate synthase (376 aa).

The region spanning 4 to 259 is the Pyruvate carboxyltransferase domain; it reads WKIIDSTLRE…RRKYKLEMLP (256 aa). Arginine 12 contributes to the 2-oxoglutarate binding site. Residue glutamate 13 participates in Mg(2+) binding. Residue histidine 72 participates in 2-oxoglutarate binding. An L-lysine-binding site is contributed by aspartate 92. Arginine 133 contacts 2-oxoglutarate. Serine 135 and threonine 166 together coordinate L-lysine. A 2-oxoglutarate-binding site is contributed by threonine 166. Positions 195 and 197 each coordinate Mg(2+). Histidine 292 functions as the Proton acceptor in the catalytic mechanism.

The protein belongs to the alpha-IPM synthase/homocitrate synthase family. Homocitrate synthase LYS20/LYS21 subfamily. Exists in an equilibrium between monomer and homodimer. Mg(2+) is required as a cofactor. Mn(2+) serves as cofactor.

The protein resides in the cytoplasm. The enzyme catalyses acetyl-CoA + 2-oxoglutarate + H2O = (2R)-homocitrate + CoA + H(+). It carries out the reaction oxaloacetate + acetyl-CoA + H2O = citrate + CoA + H(+). It participates in amino-acid biosynthesis; L-lysine biosynthesis via AAA pathway; L-alpha-aminoadipate from 2-oxoglutarate: step 1/5. Its activity is regulated as follows. Is highly and competitively inhibited by lysine that binds to the active site and competes with 2-oxoglutarate. Is also slightly inhibited by arginine and 2-aminoethylcysteine. Functionally, catalyzes the aldol-type condensation of 2-oxoglutarate with acetyl-CoA to yield homocitrate. Carries out the first step of the alpha-aminoadipate (AAA) lysine biosynthesis pathway. To a lesser extent, can also use oxaloacetate in place of 2-oxoglutarate, leading to citrate. Does not display 2-isopropylmalate synthase activity since it cannot use 2-oxoisovalerate. The chain is Homocitrate synthase from Thermus thermophilus (strain ATCC BAA-163 / DSM 7039 / HB27).